We begin with the raw amino-acid sequence, 283 residues long: Acetylglutamate kinase (283 aa).

Residues 64 to 65 (GG), arginine 86, and asparagine 181 each bind substrate.

Belongs to the acetylglutamate kinase family. ArgB subfamily.

The protein resides in the cytoplasm. The catalysed reaction is N-acetyl-L-glutamate + ATP = N-acetyl-L-glutamyl 5-phosphate + ADP. It participates in amino-acid biosynthesis; L-arginine biosynthesis; N(2)-acetyl-L-ornithine from L-glutamate: step 2/4. Functionally, catalyzes the ATP-dependent phosphorylation of N-acetyl-L-glutamate. The polypeptide is Acetylglutamate kinase (Sulfurimonas denitrificans (strain ATCC 33889 / DSM 1251) (Thiomicrospira denitrificans (strain ATCC 33889 / DSM 1251))).